Consider the following 387-residue polypeptide: uncharacterized protein (387 aa).

The disordered stretch occupies residues methionine 1–valine 23. A coiled-coil region spans residues lysine 98–lysine 129. Residues glutamate 146 to lysine 255 form a disordered region. 2 stretches are compositionally biased toward low complexity: residues glutamate 162 to glutamine 175 and glutamate 182 to glutamate 194. A compositionally biased stretch (basic and acidic residues) spans threonine 204–threonine 213. The segment covering glutamate 214–glutamine 231 has biased composition (polar residues).

This is an uncharacterized protein from Acanthamoeba polyphaga mimivirus (APMV).